Here is a 344-residue protein sequence, read N- to C-terminus: L-lactate dehydrogenase B (344 aa).

Residues 62–67 (DALPDK) and Arg-109 contribute to the NAD(+) site. Substrate contacts are provided by Arg-116, Asn-148, and Arg-179. Residue Asn-148 participates in NAD(+) binding. The active-site Proton acceptor is His-203. Thr-258 provides a ligand contact to substrate.

It belongs to the LDH/MDH superfamily. LDH family. In terms of assembly, tetramer that arise from random association of LDH-A and LDH-B.

It catalyses the reaction (S)-lactate + NAD(+) = pyruvate + NADH + H(+). It functions in the pathway fermentation; pyruvate fermentation to lactate; (S)-lactate from pyruvate: step 1/1. In Hordeum vulgare (Barley), this protein is L-lactate dehydrogenase B.